Consider the following 172-residue polypeptide: Adenine phosphoribosyltransferase (172 aa).

Belongs to the purine/pyrimidine phosphoribosyltransferase family. In terms of assembly, homodimer.

It is found in the cytoplasm. The enzyme catalyses AMP + diphosphate = 5-phospho-alpha-D-ribose 1-diphosphate + adenine. Its pathway is purine metabolism; AMP biosynthesis via salvage pathway; AMP from adenine: step 1/1. Its function is as follows. Catalyzes a salvage reaction resulting in the formation of AMP, that is energically less costly than de novo synthesis. This chain is Adenine phosphoribosyltransferase, found in Clostridium botulinum (strain Alaska E43 / Type E3).